The primary structure comprises 474 residues: Ribulose bisphosphate carboxylase large chain (474 aa).

Position 13 is an N6,N6,N6-trimethyllysine (Lys13). Residues Asn122 and Thr172 each contribute to the substrate site. The active-site Proton acceptor is Lys174. Residue Lys176 participates in substrate binding. Lys200, Asp202, and Glu203 together coordinate Mg(2+). Lys200 is subject to N6-carboxylysine. His293 acts as the Proton acceptor in catalysis. Residues Arg294, His326, and Ser378 each contribute to the substrate site.

It belongs to the RuBisCO large chain family. Type I subfamily. In terms of assembly, heterohexadecamer of 8 large chains and 8 small chains; disulfide-linked. The disulfide link is formed within the large subunit homodimers. Mg(2+) is required as a cofactor. Post-translationally, the disulfide bond which can form in the large chain dimeric partners within the hexadecamer appears to be associated with oxidative stress and protein turnover.

It localises to the plastid. Its subcellular location is the chloroplast. The enzyme catalyses 2 (2R)-3-phosphoglycerate + 2 H(+) = D-ribulose 1,5-bisphosphate + CO2 + H2O. It catalyses the reaction D-ribulose 1,5-bisphosphate + O2 = 2-phosphoglycolate + (2R)-3-phosphoglycerate + 2 H(+). Its function is as follows. RuBisCO catalyzes two reactions: the carboxylation of D-ribulose 1,5-bisphosphate, the primary event in carbon dioxide fixation, as well as the oxidative fragmentation of the pentose substrate in the photorespiration process. Both reactions occur simultaneously and in competition at the same active site. The polypeptide is Ribulose bisphosphate carboxylase large chain (Dendrophthora clavata (Columbian mistletoe)).